The following is an 86-amino-acid chain: Diphthamide biosynthesis protein 3 (86 aa).

One can recognise a DPH-type MB domain in the interval 4–60; it reads YHDEVEIEDFEYDEEEEMYYYPCPCGDRFQISKEELIEGEEVATCPSCSLVIKVIYD. Cysteine 26, cysteine 28, cysteine 48, and cysteine 51 together coordinate Fe cation.

Belongs to the DPH3 family. In terms of assembly, component of the 2-(3-amino-3-carboxypropyl)histidine synthase complex composed of Dph1, Dph2, Dph3 and a NADH-dependent reductase. Fe(2+) serves as cofactor.

The catalysed reaction is [3Fe-4S](1+)-[protein] + Fe(2+)-[Dph3] = [3Fe-4S](0)-[protein] + Fe(3+)-[Dph3]. It carries out the reaction 2 [3Fe-4S](0)-[protein] + 2 Fe(2+)-[Dph3] + NADH = 2 [4Fe-4S](1+)-[protein] + 2 [Dph3] + NAD(+) + H(+). The protein operates within protein modification; peptidyl-diphthamide biosynthesis. Its function is as follows. Required for the first step of diphthamide biosynthesis, a post-translational modification of histidine which occurs in elongation factor 2. Dph1 and Dph2 transfer a 3-amino-3-carboxypropyl (ACP) group from S-adenosyl-L-methionine (SAM) to a histidine residue, the reaction is assisted by a reduction system comprising Dph3 and a NADH-dependent reductase. Acts as an electron donor to reduce the Fe-S cluster in Dph1-Dph2 keeping the [4Fe-4S] clusters in the active and reduced state. Restores iron to Dph1-Dph2 iron-sulfur clusters which have degraded from [4Fe-4S] to [3Fe-4S] by donating an iron atom to reform [4Fe-4S] clusters, in a manner dependent on the presence of elongation factor 2 and SAM. Associates with the elongator complex and is required for tRNA Wobble base modifications mediated by the elongator complex. The elongator complex is required for multiple tRNA modifications, including mcm5U (5-methoxycarbonylmethyl uridine), mcm5s 2U (5-methoxycarbonylmethyl-2-thiouridine), and ncm5U (5-carbamoylmethyl uridine). This Drosophila melanogaster (Fruit fly) protein is Diphthamide biosynthesis protein 3.